The sequence spans 587 residues: Bifunctional dihydrofolate reductase-thymidylate synthase (587 aa).

A DHFR domain is found at 9–237 (DIYAICACCK…TTLDFIIYSK (229 aa)). 36 to 42 (GIGNAGV) serves as a coordination point for NADP(+). D51 is a substrate binding site. Residues 108–110 (KKS) and 129–132 (LSRT) each bind NADP(+). I173, Y179, and T194 together coordinate substrate. 174–181 (GGSSVYKE) provides a ligand contact to NADP(+). The segment at 301-587 (NHPEYQYLNI…HDKINMDMAA (287 aa)) is thymidylate synthase. Residue R324 coordinates dUMP. The active site involves C469. DUMP is bound by residues H470, 488–492 (QRSCD), N500, and 530–532 (HVY).

The protein in the N-terminal section; belongs to the dihydrofolate reductase family. It in the C-terminal section; belongs to the thymidylate synthase family. As to quaternary structure, homodimer.

It catalyses the reaction (6S)-5,6,7,8-tetrahydrofolate + NADP(+) = 7,8-dihydrofolate + NADPH + H(+). The enzyme catalyses dUMP + (6R)-5,10-methylene-5,6,7,8-tetrahydrofolate = 7,8-dihydrofolate + dTMP. Its pathway is cofactor biosynthesis; tetrahydrofolate biosynthesis; 5,6,7,8-tetrahydrofolate from 7,8-dihydrofolate: step 1/1. In terms of biological role, bifunctional enzyme. Involved in de novo dTMP biosynthesis. Key enzyme in folate metabolism. Catalyzes an essential reaction for de novo glycine and purine synthesis, DNA precursor synthesis, and for the conversion of dUMP to dTMP. This is Bifunctional dihydrofolate reductase-thymidylate synthase from Plasmodium berghei (strain Anka).